The chain runs to 404 residues: uncharacterized protein (404 aa).

The next 11 membrane-spanning stretches (helical) occupy residues 15–35, 43–63, 84–104, 121–141, 154–174, 187–207, 231–251, 279–299, 316–336, 338–358, and 373–393; these read WSLL…PGFL, NTLA…DIFA, MVLP…GLAF, GITP…IFVI, IAGF…APPV, ISIF…ITFA, VVGI…VLGV, IFGL…AYTS, GIII…GQPA, ILVL…GTLL, and PLWL…MGIY.

It belongs to the NRAMP family.

It localises to the cell membrane. This is an uncharacterized protein from Bacillus subtilis (strain 168).